The chain runs to 883 residues: Serine/threonine-protein kinase greatwall (883 aa).

Methionine 1 carries the post-translational modification N-acetylmethionine. The tract at residues 1-23 (MEPTMGGEMESGGGAATGECVNR) is disordered. One can recognise a Protein kinase domain in the interval 35 to 839 (FTIVKPISRG…MKELKHHPLF (805 aa)). ATP is bound by residues 41-49 (ISRGAFGKV) and lysine 62. The Proton acceptor role is filled by aspartate 156. 2 positions are modified to phosphothreonine: threonine 209 and threonine 224. Phosphoserine is present on serine 295. The disordered stretch occupies residues 298–317 (RLATSSTSSPSHTFISSMES). Residues 301 to 314 (TSSTSSPSHTFISS) show a composition bias toward low complexity. Residues serine 373 and serine 456 each carry the phosphoserine modification. Positions 511–530 (ENVGSSFTDKHQTPEKSPVP) are disordered. Threonine 523 is subject to Phosphothreonine. A phosphoserine mark is found at serine 556 and serine 560. A disordered region spans residues 569–597 (IHMDSDSSFPGISIMESPLGGQSLDPDKN). Residues serine 635, serine 661, and serine 672 each carry the phosphoserine modification. The interval 706 to 737 (RSDMPYQQTPNQVKSETPYRTPKSVRRGAAPV) is disordered. Over residues 710–720 (PYQQTPNQVKS) the composition is skewed to polar residues. A Phosphothreonine modification is found at threonine 726. Phosphoserine is present on serine 729. Phosphothreonine; by CDK1 is present on threonine 745. One can recognise an AGC-kinase C-terminal domain in the interval 840–883 (SGVDWENLQHQKMPFIPQPDDETDTSYFEARNNAQHLTVSGFSL). 2 positions are modified to phosphoserine: serine 879 and serine 882.

Belongs to the protein kinase superfamily. AGC Ser/Thr protein kinase family. In terms of processing, phosphorylation at Thr-745 by CDK1 during M phase activates its kinase activity. Maximum phosphorylation occurs in prometaphase.

It is found in the cytoplasm. Its subcellular location is the cytoskeleton. It localises to the microtubule organizing center. The protein localises to the centrosome. The protein resides in the nucleus. It catalyses the reaction L-seryl-[protein] + ATP = O-phospho-L-seryl-[protein] + ADP + H(+). It carries out the reaction L-threonyl-[protein] + ATP = O-phospho-L-threonyl-[protein] + ADP + H(+). Functionally, serine/threonine kinase that plays a key role in M phase by acting as a regulator of mitosis entry and maintenance. Acts by promoting the inactivation of protein phosphatase 2A (PP2A) during M phase: does not directly inhibit PP2A but acts by mediating phosphorylation and subsequent activation of ARPP19 and ENSA at 'Ser-62' and 'Ser-67', respectively. ARPP19 and ENSA are phosphatase inhibitors that specifically inhibit the PPP2R2D (PR55-delta) subunit of PP2A. Inactivation of PP2A during M phase is essential to keep cyclin-B1-CDK1 activity high. Following DNA damage, it is also involved in checkpoint recovery by being inhibited. In Bos taurus (Bovine), this protein is Serine/threonine-protein kinase greatwall (MASTL).